A 286-amino-acid polypeptide reads, in one-letter code: Aquaporin PIP1-1 (286 aa).

An N-acetylmethionine modification is found at methionine 1. A disordered region spans residues 1 to 34 (MEGKEEDVRVGANKFPERQPIGTSAQSDKDYKEP). Over 1 to 54 (MEGKEEDVRVGANKFPERQPIGTSAQSDKDYKEPPPAPFFEPGELSSWSFWRAG) the chain is Cytoplasmic. A helical membrane pass occupies residues 55 to 75 (IAEFIATFLFLYITVLTVMGV). Over 76–91 (KRSPNMCASVGIQGIA) the chain is Extracellular. The chain crosses the membrane as a helical span at residues 92-112 (WAFGGMIFALVYCTAGISGGH). At 113–132 (INPAVTFGLFLARKLSLTRA) the chain is on the cytoplasmic side. Positions 114 to 116 (NPA) match the NPA 1 motif. Residues 133-153 (LYYIVMQCLGAICGAGVVKGF) traverse the membrane as a helical segment. At 154–174 (QPKQYQALGGGANTVAHGYTK) the chain is on the extracellular side. The chain crosses the membrane as a helical span at residues 175 to 195 (GSGLGAEIIGTFVLVYTVFSA). The Cytoplasmic portion of the chain corresponds to 196–208 (TDAKRNARDSHVP). The helical transmembrane segment at 209–229 (ILAPLPIGFAVFLVHLATIPI) threads the bilayer. The Extracellular portion of the chain corresponds to 230 to 256 (TGTGINPARSLGAAIIYNKDHSWDDHW). An NPA 2 motif is present at residues 235 to 237 (NPA). A helical membrane pass occupies residues 257–277 (VFWVGPFIGAALAALYHVVVI). Over 278–286 (RAIPFKSRS) the chain is Cytoplasmic. Residue serine 284 is modified to Phosphoserine.

It belongs to the MIP/aquaporin (TC 1.A.8) family. PIP (TC 1.A.8.11) subfamily. In terms of tissue distribution, widely expressed. Expressed in roots, above ground and in flower buds.

It is found in the cell membrane. In terms of biological role, water channel required to facilitate the transport of water across cell membrane. Its function is impaired by Hg(2+). The sequence is that of Aquaporin PIP1-1 (PIP1-1) from Arabidopsis thaliana (Mouse-ear cress).